The chain runs to 305 residues: UDP-3-O-acyl-N-acetylglucosamine deacetylase (305 aa).

Residues His-78, His-237, and Asp-241 each contribute to the Zn(2+) site. His-264 acts as the Proton donor in catalysis.

It belongs to the LpxC family. It depends on Zn(2+) as a cofactor.

It catalyses the reaction a UDP-3-O-[(3R)-3-hydroxyacyl]-N-acetyl-alpha-D-glucosamine + H2O = a UDP-3-O-[(3R)-3-hydroxyacyl]-alpha-D-glucosamine + acetate. It participates in glycolipid biosynthesis; lipid IV(A) biosynthesis; lipid IV(A) from (3R)-3-hydroxytetradecanoyl-[acyl-carrier-protein] and UDP-N-acetyl-alpha-D-glucosamine: step 2/6. Its function is as follows. Catalyzes the hydrolysis of UDP-3-O-myristoyl-N-acetylglucosamine to form UDP-3-O-myristoylglucosamine and acetate, the committed step in lipid A biosynthesis. This is UDP-3-O-acyl-N-acetylglucosamine deacetylase from Burkholderia thailandensis (strain ATCC 700388 / DSM 13276 / CCUG 48851 / CIP 106301 / E264).